The sequence spans 725 residues: Catalase-peroxidase (725 aa).

Residues 99 to 227 constitute a cross-link (tryptophyl-tyrosyl-methioninium (Trp-Tyr) (with M-253)); that stretch reads WHAAGTYRIA…LAAVMMGLIY (129 aa). The active-site Proton acceptor is the histidine 100. Residues 227 to 253 constitute a cross-link (tryptophyl-tyrosyl-methioninium (Tyr-Met) (with W-99)); that stretch reads YVNPEGVDGNPDPLKTAHDIRITFSRM. Histidine 268 is a binding site for heme b.

The protein belongs to the peroxidase family. Peroxidase/catalase subfamily. As to quaternary structure, homodimer or homotetramer. The cofactor is heme b. Formation of the three residue Trp-Tyr-Met cross-link is important for the catalase, but not the peroxidase activity of the enzyme.

It carries out the reaction H2O2 + AH2 = A + 2 H2O. The enzyme catalyses 2 H2O2 = O2 + 2 H2O. Its function is as follows. Bifunctional enzyme with both catalase and broad-spectrum peroxidase activity. This Picosynechococcus sp. (strain ATCC 27264 / PCC 7002 / PR-6) (Agmenellum quadruplicatum) protein is Catalase-peroxidase.